A 267-amino-acid chain; its full sequence is Placental prolactin-related protein 2 (267 aa).

N-linked (GlcNAc...) asparagine glycans are attached at residues N99 and N121. Cystine bridges form between C126-C244 and C261-C267.

The protein belongs to the somatotropin/prolactin family.

It localises to the secreted. Functionally, placental prolactin-related proteins may play a specific role during gestation. The chain is Placental prolactin-related protein 2 (PRP2) from Bos taurus (Bovine).